A 242-amino-acid chain; its full sequence is 7-cyano-7-deazaguanine synthase (242 aa).

The segment at 1–22 (MNSSSNEKNKDLNRKNFSSKTD) is disordered. ATP is bound at residue 32 to 42 (LSGGLDSTTCL). Cys-212, Cys-221, Cys-224, and Cys-227 together coordinate Zn(2+).

Belongs to the QueC family. It depends on Zn(2+) as a cofactor.

The enzyme catalyses 7-carboxy-7-deazaguanine + NH4(+) + ATP = 7-cyano-7-deazaguanine + ADP + phosphate + H2O + H(+). The protein operates within purine metabolism; 7-cyano-7-deazaguanine biosynthesis. Catalyzes the ATP-dependent conversion of 7-carboxy-7-deazaguanine (CDG) to 7-cyano-7-deazaguanine (preQ(0)). The sequence is that of 7-cyano-7-deazaguanine synthase from Leptospira interrogans serogroup Icterohaemorrhagiae serovar copenhageni (strain Fiocruz L1-130).